A 446-amino-acid chain; its full sequence is Low-affinity gluconate transporter (446 aa).

Residue Met-1 is a topological domain, cytoplasmic. A helical transmembrane segment spans residues 2–22; the sequence is TTLTLVLTAVGSVLLLLFLVM. Residues 23 to 26 lie on the Periplasmic side of the membrane; the sequence is KARM. Residues 27–47 traverse the membrane as a helical segment; sequence HAFLALMVVSMGAGLFSGMPL. The Cytoplasmic portion of the chain corresponds to 48–58; it reads DKIAATMEKGM. A helical membrane pass occupies residues 59–79; it reads GGTLGFLAVVVALGAMFGKIL. The Periplasmic portion of the chain corresponds to 80–109; the sequence is HETGAVDQIAVKMLKSFGHSRAHYAIGLAG. A helical membrane pass occupies residues 110-130; the sequence is LVCALPLFFEVAIVLLISVAF. The Cytoplasmic segment spans residues 131–142; that stretch reads SMARHTGTNLVK. Residues 143–163 form a helical membrane-spanning segment; it reads LVIPLFAGVAAAAAFLVPGPA. Topologically, residues 164–176 are periplasmic; sequence PMLLASQMNADFG. A helical transmembrane segment spans residues 177–197; the sequence is WMILIGLCAAIPGMIIAGPLW. Residues 198–225 lie on the Cytoplasmic side of the membrane; it reads GNFISRYVELHIPDDISEPHLGEGKMPS. A helical membrane pass occupies residues 226–246; it reads FGFSLSLILLPLVLVGLKTIA. The Periplasmic portion of the chain corresponds to 247 to 261; the sequence is ARFVPEGSTAYEWFE. Residues 262–282 form a helical membrane-spanning segment; that stretch reads FIGHPFTAILVACLVAIYGLA. Residues 283–294 lie on the Cytoplasmic side of the membrane; the sequence is MRQGMPKDKVME. Residues 295 to 315 form a helical membrane-spanning segment; sequence ICGHALQPAGIILLVIGAGGV. Topologically, residues 316 to 330 are periplasmic; that stretch reads FKQVLVDSGVGPALG. The helical transmembrane segment at 331-351 threads the bilayer; it reads EALTGMGLPIAITCFVLAAAV. Position 352 (Arg-352) is a topological domain, cytoplasmic. A helical transmembrane segment spans residues 353–373; it reads IIQGSATVACLTAVGLVMPVI. The Periplasmic segment spans residues 374 to 387; sequence EQLNYSGAQMAALS. A helical transmembrane segment spans residues 388–408; it reads ICIAGGSIVVSHVNDAGFWLF. The Cytoplasmic portion of the chain corresponds to 409–424; that stretch reads GKFTGATEAETLKTWT. The helical transmembrane segment at 425-445 threads the bilayer; sequence MMETILGTVGAIVGMIAFQLL. Ser-446 is a topological domain (periplasmic).

Belongs to the GntP permease family.

It is found in the cell inner membrane. Functionally, part of the gluconate utilization system Gnt-I; low-affinity intake of gluconate. The polypeptide is Low-affinity gluconate transporter (gntU) (Escherichia coli O157:H7).